We begin with the raw amino-acid sequence, 185 residues long: ATP-dependent protease subunit HslV (185 aa).

Thr12 is an active-site residue. Positions 168, 171, and 174 each coordinate Na(+).

Belongs to the peptidase T1B family. HslV subfamily. A double ring-shaped homohexamer of HslV is capped on each side by a ring-shaped HslU homohexamer. The assembly of the HslU/HslV complex is dependent on binding of ATP.

It is found in the cytoplasm. The catalysed reaction is ATP-dependent cleavage of peptide bonds with broad specificity.. With respect to regulation, allosterically activated by HslU binding. Protease subunit of a proteasome-like degradation complex believed to be a general protein degrading machinery. This is ATP-dependent protease subunit HslV from Cereibacter sphaeroides (strain ATCC 17029 / ATH 2.4.9) (Rhodobacter sphaeroides).